The primary structure comprises 325 residues: UDP-N-acetylenolpyruvoylglucosamine reductase (325 aa).

The region spanning 40–221 (RTGGLAELFY…RAAMDEVALH (182 aa)) is the FAD-binding PCMH-type domain. The active site involves Arg-186. Ser-235 functions as the Proton donor in the catalytic mechanism. Glu-305 is a catalytic residue.

Belongs to the MurB family. The cofactor is FAD.

It is found in the cytoplasm. It carries out the reaction UDP-N-acetyl-alpha-D-muramate + NADP(+) = UDP-N-acetyl-3-O-(1-carboxyvinyl)-alpha-D-glucosamine + NADPH + H(+). It participates in cell wall biogenesis; peptidoglycan biosynthesis. Cell wall formation. The chain is UDP-N-acetylenolpyruvoylglucosamine reductase from Bartonella henselae (strain ATCC 49882 / DSM 28221 / CCUG 30454 / Houston 1) (Rochalimaea henselae).